The sequence spans 682 residues: Methionine--tRNA ligase (682 aa).

The short motif at 14–24 is the 'HIGH' region element; it reads PYANGSIHLGH. Residues C145, C148, C158, and C161 each coordinate Zn(2+). A 'KMSKS' region motif is present at residues 331–335; that stretch reads KMSKS. K334 lines the ATP pocket. One can recognise a tRNA-binding domain in the interval 580–682; it reads AFAAVDLRVA…SGAKPGQRIK (103 aa).

It belongs to the class-I aminoacyl-tRNA synthetase family. MetG type 1 subfamily. In terms of assembly, homodimer. Requires Zn(2+) as cofactor.

It is found in the cytoplasm. It catalyses the reaction tRNA(Met) + L-methionine + ATP = L-methionyl-tRNA(Met) + AMP + diphosphate. In terms of biological role, is required not only for elongation of protein synthesis but also for the initiation of all mRNA translation through initiator tRNA(fMet) aminoacylation. This chain is Methionine--tRNA ligase, found in Pseudomonas savastanoi pv. phaseolicola (strain 1448A / Race 6) (Pseudomonas syringae pv. phaseolicola (strain 1448A / Race 6)).